The sequence spans 1040 residues: Multidrug resistance protein MdtB (1040 aa).

Transmembrane regions (helical) follow at residues 25–45, 347–367, 369–389, 396–416, 440–460, 472–492, 537–557, 869–889, 890–910, 911–931, 968–988, and 998–1018; these read LLMA…PVAA, LMLA…NIPA, IIPG…MVFL, LTLM…IVVI, IGFT…PLLF, FAVT…TLTP, WLTL…WIVI, LIVA…ESFI, HPIT…LALM, IAGS…IGIV, ILMT…STGV, and IAMV…TPVI.

Belongs to the resistance-nodulation-cell division (RND) (TC 2.A.6) family. MdtB subfamily. In terms of assembly, part of a tripartite efflux system composed of MdtA, MdtB and MdtC. MdtB forms a heteromultimer with MdtC.

Its subcellular location is the cell inner membrane. The protein is Multidrug resistance protein MdtB of Salmonella arizonae (strain ATCC BAA-731 / CDC346-86 / RSK2980).